A 273-amino-acid polypeptide reads, in one-letter code: Gamma-glutamyl cyclotransferase gliK (273 aa).

Residues 227–243 (WLGWIILTLYGLMWSYH) form a helical membrane-spanning segment.

The protein belongs to the class-I pyridoxal-phosphate-dependent aminotransferase family.

It is found in the membrane. It carries out the reaction an alpha-(gamma-L-glutamyl)-L-amino acid = 5-oxo-L-proline + an L-alpha-amino acid. It participates in mycotoxin biosynthesis. Functionally, gamma-glutamyl cyclotransferase-like protein; part of the gene cluster that mediates the biosynthesis of gliotoxin, a member of the epipolythiodioxopiperazine (ETP) class of toxins characterized by a disulfide bridged cyclic dipeptide. The first step in gliotoxin biosynthesis is the condensation of serine and phenylalanine to form the cyclo-L-phenylalanyl-L-serine diketopiperazine (DKP) by the NRPS gliP. GliP is also able to produce the DKP cyclo-L-tryptophanyl-L-serine, suggesting that the substrate specificity of the first adenylation (A) domain in gliP is sufficiently relaxed to accommodate both L-Phe and L-Trp. The cytochrome P450 monooxygenase gliC has been shown to catalyze the subsequent hydroxylation of the alpha-carbon of L-Phe in cyclo-L-phenylalanyl-L-serine whereas the second cytochrome P450 enzyme, gliF, is presumably involved in the modification of the DKP side chain. The glutathione S-transferase (GST) gliG then forms a bis-glutathionylated biosynthetic intermediate which is responsible for the sulfurization of gliotoxin. This bis-glutathionylated intermediate is subsequently processed by the gamma-glutamyl cyclotransferase gliK to remove both gamma-glutamyl moieties. Subsequent processing via gliI yields a biosynthetic intermediate, which is N-methylated via the N-methyltransferase gliN, before the gliotoxin oxidoreductase gliT-mediated disulfide bridge closure. GliN-mediated amide methylation confers stability to ETP, damping the spontaneous formation of tri- and tetrasulfides. Intracellular dithiol gliotoxin oxidized by gliT is subsequently effluxed by gliA. Gliotoxin contributes to pathogenesis during invasive aspergillosis. In macrophages and neutrophils, gliotoxin showed inhibition of various different cell functions including cytokine production, antigen presentation, phagocytosis, and production of reactive oxygen species. In Aspergillus fumigatus (strain ATCC MYA-4609 / CBS 101355 / FGSC A1100 / Af293) (Neosartorya fumigata), this protein is Gamma-glutamyl cyclotransferase gliK.